We begin with the raw amino-acid sequence, 899 residues long: MRDADGKDISGAGIRRRFLEFYEARDHARLPSSSLVPEDPTVLLTIAGMLQFKPVFMGQEERKVPTATTTQKCVRTNDIENVGVTARHHTFFEMLGNFSFGDYFKKEAIAWAWEISTKEYGLDASRIWISVFREDDEAYAIWRDEIGIPENRIKRMDEADNFWAAGPTGPCGPCSELYWDFHPERGVDGSEDLDDDSRFIEFYNLVFMESVRDTDGNMKPLKRKNIDTGMGLERMAQILQGKPNNYETDLIRPIIDAAASMAGISYDDADDATKLKLKVIGDHTRAVCYLISDGVLPSNVGRGYIVRRLLRRVVRCGRLLGVKAPDGAGAFTPAIARVAIGLSEACDANVLKSSQKICDELEREELRFATTLGRGEEILADMLAAAKTKDANAPKLTGEDAFTLYDTYGFPLDITTDVATEAGVDVDVDGFEKAMAAARDLSRDARVAVDVTVGDLLGAIADELGEPTRFTGYGSVTEEGVKVRALLKGGERVASAGAGDTVEVVLDATPFYAEGGGQVGDEGEIILSDDRGKLVVGDCRKAAGGRLFVHSCVVSEGVVGEGDAVTATVSAASRRRAKANHTATHLLQSALKMTIGEDVSQAGSLVNFERLRFDFNAPSAPTPEELARVESLVNGWIGDAIDLTAEEMAISRAKEKGATAMFGEKYGDVVRVVDVPGVSMELCGGTHVKNTAEIGGFKILSESGIAAGVRRIEAVSGPGVVDLLQERDGTVKALAGSLRVPPEEIAGRVSALMEDLKTSQKEAEALRGELAVAKATALASQAIDAPGGAKVLVARMDGVDPAALKAAAESLVAALGDDVAVVLGSGGDDGKVGLVASFTEGVQKAGGLKAGVVLGATAKACGGGGGGKPGFAQAGGRDASALDAALEDAKKTIVDALSK.

The Zn(2+) site is built by His-581, His-585, Cys-683, and His-687.

This sequence belongs to the class-II aminoacyl-tRNA synthetase family. Monomer. Requires Zn(2+) as cofactor.

The protein resides in the plastid. The protein localises to the chloroplast. Its subcellular location is the mitochondrion. It catalyses the reaction tRNA(Ala) + L-alanine + ATP = L-alanyl-tRNA(Ala) + AMP + diphosphate. In terms of biological role, catalyzes the attachment of alanine to tRNA(Ala) in a two-step reaction: alanine is first activated by ATP to form Ala-AMP and then transferred to the acceptor end of tRNA(Ala). Also edits incorrectly charged tRNA(Ala) via its editing domain. This chain is Alanine--tRNA ligase, chloroplastic/mitochondrial, found in Micromonas pusilla (strain CCMP1545) (Picoplanktonic green alga).